The primary structure comprises 156 residues: Small ribosomal subunit protein uS7 (156 aa).

It belongs to the universal ribosomal protein uS7 family. Part of the 30S ribosomal subunit. Contacts proteins S9 and S11.

In terms of biological role, one of the primary rRNA binding proteins, it binds directly to 16S rRNA where it nucleates assembly of the head domain of the 30S subunit. Is located at the subunit interface close to the decoding center, probably blocks exit of the E-site tRNA. This Streptococcus pneumoniae serotype 4 (strain ATCC BAA-334 / TIGR4) protein is Small ribosomal subunit protein uS7.